Here is a 204-residue protein sequence, read N- to C-terminus: HTH-type transcriptional repressor KstR2 (204 aa).

One can recognise an HTH tetR-type domain in the interval 13-73; sequence SGRRTELLDI…EILRGFLDDL (61 aa). The H-T-H motif DNA-binding region spans 36-55; it reads TVRDIADAAGILSGSLYHHF.

As to quaternary structure, homodimer.

Controls the expression of a small regulon that may play a role in the utilization of cholesterol. The protein is HTH-type transcriptional repressor KstR2 (kstR2) of Rhodococcus jostii (strain RHA1).